The sequence spans 85 residues: MKVTLIAILTCAAVLVLHTTAAEELEAESQLMEVGMPDTELAAVDEERHFECSVSCEIEKEGNKDCKKKKCKGGWKCKFNMCVKV.

The first 22 residues, 1 to 22 (MKVTLIAILTCAAVLVLHTTAA), serve as a signal peptide directing secretion. Positions 23–48 (EELEAESQLMEVGMPDTELAAVDEER) are excised as a propeptide. 3 disulfide bridges follow: Cys52/Cys66, Cys56/Cys77, and Cys71/Cys82.

The protein belongs to the neurotoxin 12 (Hwtx-2) family. 02 (Hwtx-2) subfamily. Expressed by the venom gland.

The protein resides in the secreted. Functionally, postsynaptic neurotoxin. This Cyriopagopus hainanus (Chinese bird spider) protein is U4-theraphotoxin-Hhn1o.